The chain runs to 180 residues: Putative 3-methyladenine DNA glycosylase (180 aa).

It belongs to the DNA glycosylase MPG family.

This is Putative 3-methyladenine DNA glycosylase from Ehrlichia chaffeensis (strain ATCC CRL-10679 / Arkansas).